Consider the following 333-residue polypeptide: Fructose-1,6-bisphosphatase class 1 (333 aa).

Mg(2+)-binding residues include Glu-90, Asp-113, Leu-115, and Asp-116. Substrate is bound by residues 116–119, Asn-209, Tyr-242, and Lys-272; that span reads DGSS. Glu-278 contacts Mg(2+).

Belongs to the FBPase class 1 family. In terms of assembly, homotetramer. Requires Mg(2+) as cofactor.

Its subcellular location is the cytoplasm. The enzyme catalyses beta-D-fructose 1,6-bisphosphate + H2O = beta-D-fructose 6-phosphate + phosphate. It participates in carbohydrate biosynthesis; gluconeogenesis. This Pasteurella multocida (strain Pm70) protein is Fructose-1,6-bisphosphatase class 1.